A 327-amino-acid polypeptide reads, in one-letter code: Methionyl-tRNA formyltransferase (327 aa).

Residue 118–121 participates in (6S)-5,6,7,8-tetrahydrofolate binding; sequence SLLP.

Belongs to the Fmt family.

It catalyses the reaction L-methionyl-tRNA(fMet) + (6R)-10-formyltetrahydrofolate = N-formyl-L-methionyl-tRNA(fMet) + (6S)-5,6,7,8-tetrahydrofolate + H(+). Its function is as follows. Attaches a formyl group to the free amino group of methionyl-tRNA(fMet). The formyl group appears to play a dual role in the initiator identity of N-formylmethionyl-tRNA by promoting its recognition by IF2 and preventing the misappropriation of this tRNA by the elongation apparatus. This Corynebacterium jeikeium (strain K411) protein is Methionyl-tRNA formyltransferase.